We begin with the raw amino-acid sequence, 1888 residues long: Tensin-1 (1888 aa).

Residues 21-31 show a composition bias toward pro residues; that stretch reads PQPPGTPPGPA. Positions 21-45 are disordered; sequence PQPPGTPPGPARPERCEPGGAAPDP. The segment at 61–108 adopts a Phorbol-ester/DAG-type zinc-finger fold; that stretch reads THHFKVKAFKKVKPCGICRQAITREGCVCKVCSFSCHRKCQAKVAAPC. Positions 132–174 are disordered; the sequence is GEGDCRVGSSPKNLEEGGSMRVSPSIQPQPQSQPTSLSRNTSV. Residues 154–167 show a composition bias toward low complexity; that stretch reads SPSIQPQPQSQPTS. The Phosphatase tensin-type domain maps to 175 to 347; it reads SRAMEDSCEL…HYFSGLLSGS (173 aa). The C2 tensin-type domain maps to 352–478; the sequence is NKPLFLHHVI…GKVEFVFSYG (127 aa). Residues Ser509 and Ser535 each carry the phosphoserine modification. Tyr537 bears the Phosphotyrosine mark. Disordered stretches follow at residues 543–608, 696–722, and 789–854; these read KDSL…PQEK, VTNTSESGYPETLSPLTNGLDKPYSTE, and RSQS…SAET. At Ser549 the chain carries Phosphoserine. The span at 571–584 shows a compositional bias: polar residues; that stretch reads LSVSSDSGNSTAST. Residue Ser604 is modified to Phosphoserine. Phosphoserine is present on Ser792. The span at 835-852 shows a compositional bias: polar residues; the sequence is RSPLQSLARSKPSPQLSA. Ser867 bears the Phosphoserine mark. Disordered regions lie at residues 893-1077 and 1109-1555; these read PLHK…RSPV and EEME…AGSL. The segment covering 905 to 922 has biased composition (low complexity); it reads PGASPLSSQPLLGSSRQS. Phosphoserine occurs at positions 930, 935, and 952. Residues 962–986 are compositionally biased toward polar residues; it reads GSNQSFHPKSPASSTFLPSPHSSAG. Thr1015 carries the post-translational modification Phosphothreonine. Phosphoserine is present on Ser1054. The segment covering 1057–1069 has biased composition (polar residues); the sequence is QYENQSPEATSPR. The residue at position 1058 (Tyr1058) is a Phosphotyrosine. 3 positions are modified to phosphoserine: Ser1062, Ser1118, and Ser1122. Residues 1169 to 1179 are compositionally biased toward basic and acidic residues; it reads EVTKPPEEPRS. A compositionally biased stretch (low complexity) spans 1227–1239; the sequence is SPSPLSTSSPILS. A compositionally biased stretch (polar residues) spans 1240 to 1257; that stretch reads ADSTSVGSFPSVVSSDQG. Ser1279 is subject to Phosphoserine. The segment covering 1284–1300 has biased composition (low complexity); it reads SYQSSSPVPVGGSSYNS. The span at 1301 to 1322 shows a compositional bias: polar residues; it reads PDYSLQPFSSSPESQGQPQYSA. The O-linked (GalNAc...) serine glycan is linked to Ser1321. Ser1331 is modified (phosphoserine). Thr1343 carries the post-translational modification Phosphothreonine. A Phosphoserine modification is found at Ser1346. Phosphothreonine is present on Thr1420. The residue at position 1423 (Ser1423) is a Phosphoserine. Residues 1436–1446 are compositionally biased toward polar residues; the sequence is NLASSLHSNAV. Ser1448, Ser1463, and Ser1468 each carry phosphoserine. The segment covering 1490–1507 has biased composition (polar residues); that stretch reads LSRQSSASGYQAPSTPSF. Low complexity predominate over residues 1518–1530; that stretch reads SSPATSPSPDSAA. A phosphoserine mark is found at Ser1535, Ser1547, Ser1554, and Ser1599. The region spanning 1616–1725 is the SH2 domain; the sequence is WYKPEISREQ…ALPCKLVIPS (110 aa). The residue at position 1741 (Ser1741) is a Phosphoserine. A PTB domain is found at 1751–1885; that stretch reads ACNVLFVNSV…FVSKVMLSAG (135 aa).

Belongs to the PTEN phosphatase protein family. As to quaternary structure, binds to actin filaments and interacts with phosphotyrosine-containing proteins. Interacts with STARD8. Interacts with protein phosphatase PPP1CA. Interacts (via N-terminus) with Rho GTPase-activating protein DLC1; the interaction is decreased by phosphorylation of TNS1. Interacts with tyrosine-phosphorylated proteins BCAR1/p130Cas and PTK2/FAK; the interactions are increased by phosphorylation of TNS1. Post-translationally, extensively phosphorylated on serine and threonine residues in a p38 MAPK-dependent manner which reduces interaction with DLC1 and increases interaction with tyrosine-phosphorylated proteins including BCAR1/p130cas and PTK2/FAK. The majority of the phosphorylated Ser/Thr residues are immediately adjacent to a proline residue. Also phosphorylated on tyrosine residues. Rapidly cleaved by calpain II.

Its subcellular location is the cell surface. It is found in the cell junction. It localises to the focal adhesion. The protein localises to the cytoplasm. The protein resides in the cytoskeleton. Its function is as follows. May act as a protein phosphatase and/or a lipid phosphatase. Involved in fibrillar adhesion formation. Essential for myofibroblast differentiation and myofibroblast-mediated extracellular matrix deposition. Enhances RHOA activation in the presence of DLC1. Plays a role in cell polarization and migration. May be involved in cartilage development and in linking signal transduction pathways to the cytoskeleton. The protein is Tensin-1 of Mus musculus (Mouse).